The chain runs to 138 residues: MELFVGTDIVEVERIKKAFDANSKFLERLFTQKEIEYFNSKRMKLPHIAGFFSAKESISKVLGTGISGFSWKDIEICHDEKGAPAVILKGKAKNIADKKGIRDIKLSISHTKTYAISCAIAIGGEKNDSADLKTDERS.

The Mg(2+) site is built by D8 and E56.

Belongs to the P-Pant transferase superfamily. AcpS family. It depends on Mg(2+) as a cofactor.

The protein resides in the cytoplasm. The catalysed reaction is apo-[ACP] + CoA = holo-[ACP] + adenosine 3',5'-bisphosphate + H(+). In terms of biological role, transfers the 4'-phosphopantetheine moiety from coenzyme A to a Ser of acyl-carrier-protein. This Thermoanaerobacter pseudethanolicus (strain ATCC 33223 / 39E) (Clostridium thermohydrosulfuricum) protein is Holo-[acyl-carrier-protein] synthase.